A 198-amino-acid polypeptide reads, in one-letter code: Recombination protein RecR (198 aa).

A C4-type zinc finger spans residues 58–73 (CSVCGNFTDKDPCAIC). A Toprim domain is found at 81-175 (SIICVIEQPK…KVTRIAHGVP (95 aa)).

The protein belongs to the RecR family.

Functionally, may play a role in DNA repair. It seems to be involved in an RecBC-independent recombinational process of DNA repair. It may act with RecF and RecO. In Clostridium botulinum (strain ATCC 19397 / Type A), this protein is Recombination protein RecR.